We begin with the raw amino-acid sequence, 137 residues long: MLVPKRVKHRREFRGKMRGYAKGGDTVSFGEYGLQATTSHWITNRQIEAARIAMTRYMKRNGQVWIKIFPHKSYTAKAIGVRMGSGKGAPEGWVAPVKRGVVMFELGGVDEATAREALRLASHKLPVKTKFVKRGEA.

This sequence belongs to the universal ribosomal protein uL16 family. Part of the 50S ribosomal subunit.

In terms of biological role, binds 23S rRNA and is also seen to make contacts with the A and possibly P site tRNAs. The protein is Large ribosomal subunit protein uL16 of Lactococcus lactis subsp. cremoris (strain SK11).